A 364-amino-acid chain; its full sequence is tRNA 2-selenouridine synthase (364 aa).

One can recognise a Rhodanese domain in the interval 14 to 136 (VLNNTPLIDV…AFRNWLMQET (123 aa)). C97 functions as the S-selanylcysteine intermediate in the catalytic mechanism.

Belongs to the SelU family. In terms of assembly, monomer.

The catalysed reaction is 5-methylaminomethyl-2-thiouridine(34) in tRNA + selenophosphate + (2E)-geranyl diphosphate + H2O + H(+) = 5-methylaminomethyl-2-selenouridine(34) in tRNA + (2E)-thiogeraniol + phosphate + diphosphate. It carries out the reaction 5-methylaminomethyl-2-thiouridine(34) in tRNA + (2E)-geranyl diphosphate = 5-methylaminomethyl-S-(2E)-geranyl-thiouridine(34) in tRNA + diphosphate. It catalyses the reaction 5-methylaminomethyl-S-(2E)-geranyl-thiouridine(34) in tRNA + selenophosphate + H(+) = 5-methylaminomethyl-2-(Se-phospho)selenouridine(34) in tRNA + (2E)-thiogeraniol. The enzyme catalyses 5-methylaminomethyl-2-(Se-phospho)selenouridine(34) in tRNA + H2O = 5-methylaminomethyl-2-selenouridine(34) in tRNA + phosphate. Functionally, involved in the post-transcriptional modification of the uridine at the wobble position (U34) of tRNA(Lys), tRNA(Glu) and tRNA(Gln). Catalyzes the conversion of 2-thiouridine (S2U-RNA) to 2-selenouridine (Se2U-RNA). Acts in a two-step process involving geranylation of 2-thiouridine (S2U) to S-geranyl-2-thiouridine (geS2U) and subsequent selenation of the latter derivative to 2-selenouridine (Se2U) in the tRNA chain. This chain is tRNA 2-selenouridine synthase, found in Sulfurovum sp. (strain NBC37-1).